The primary structure comprises 828 residues: Periplasmic nitrate reductase (828 aa).

Residues 1-31 (MKLSRRSFMKANAVAAAAAAAGLSVPGVARA) constitute a signal peptide (tat-type signal). Residues 39–95 (IKWDKAPCRFCGTGCGVLVGTQQGRVVACQGDPDAPVNRGLNCIKGYFLPKIMYGKD) enclose the 4Fe-4S Mo/W bis-MGD-type domain. C46, C49, C53, and C81 together coordinate [4Fe-4S] cluster. Mo-bis(molybdopterin guanine dinucleotide) is bound by residues K83, Q150, N175, C179, 212–219 (WGSNMAEM), 243–247 (STFQH), 262–264 (QSD), M372, Q376, N482, 508–509 (SD), K531, D558, and 718–727 (TGRVLEHWHT). F794 lines the substrate pocket. 2 residues coordinate Mo-bis(molybdopterin guanine dinucleotide): N802 and K819.

The protein belongs to the prokaryotic molybdopterin-containing oxidoreductase family. NasA/NapA/NarB subfamily. As to quaternary structure, component of the periplasmic nitrate reductase NapAB complex composed of NapA and NapB. It depends on [4Fe-4S] cluster as a cofactor. The cofactor is Mo-bis(molybdopterin guanine dinucleotide). Post-translationally, predicted to be exported by the Tat system. The position of the signal peptide cleavage has not been experimentally proven.

It is found in the periplasm. The enzyme catalyses 2 Fe(II)-[cytochrome] + nitrate + 2 H(+) = 2 Fe(III)-[cytochrome] + nitrite + H2O. In terms of biological role, catalytic subunit of the periplasmic nitrate reductase complex NapAB. Receives electrons from NapB and catalyzes the reduction of nitrate to nitrite. This is Periplasmic nitrate reductase from Salmonella dublin (strain CT_02021853).